A 92-amino-acid chain; its full sequence is uncharacterized protein (92 aa).

The next 3 membrane-spanning stretches (helical) occupy residues 1 to 21, 29 to 49, and 51 to 71; these read MEVL…GVIL, IIML…CYYL, and IAIV…LGYL.

It is found in the cell membrane. This is an uncharacterized protein from Methanocaldococcus jannaschii (strain ATCC 43067 / DSM 2661 / JAL-1 / JCM 10045 / NBRC 100440) (Methanococcus jannaschii).